The primary structure comprises 233 residues: Uridylate kinase (233 aa).

9-10 is a binding site for ATP; the sequence is GS. G43 is a UMP binding site. ATP contacts are provided by G44 and R48. UMP is bound by residues D65 and 113–119; that span reads VTPGQTT. ATP is bound by residues T139, Y145, and D148.

Belongs to the UMP kinase family. As to quaternary structure, homohexamer.

The protein resides in the cytoplasm. The enzyme catalyses UMP + ATP = UDP + ADP. It participates in pyrimidine metabolism; CTP biosynthesis via de novo pathway; UDP from UMP (UMPK route): step 1/1. With respect to regulation, inhibited by UTP. In terms of biological role, catalyzes the reversible phosphorylation of UMP to UDP. This chain is Uridylate kinase, found in Methanosarcina barkeri (strain Fusaro / DSM 804).